Here is a 316-residue protein sequence, read N- to C-terminus: Pantothenate kinase (316 aa).

ATP is bound at residue 95–102 (GSVAVGKS).

Belongs to the prokaryotic pantothenate kinase family.

It is found in the cytoplasm. The catalysed reaction is (R)-pantothenate + ATP = (R)-4'-phosphopantothenate + ADP + H(+). It functions in the pathway cofactor biosynthesis; coenzyme A biosynthesis; CoA from (R)-pantothenate: step 1/5. This chain is Pantothenate kinase, found in Shewanella sediminis (strain HAW-EB3).